The chain runs to 472 residues: L-fuculokinase (472 aa).

The protein belongs to the FGGY kinase family. Requires a divalent metal cation as cofactor.

The enzyme catalyses L-fuculose + ATP = L-fuculose 1-phosphate + ADP + H(+). It functions in the pathway carbohydrate degradation; L-fucose degradation; L-lactaldehyde and glycerone phosphate from L-fucose: step 2/3. In terms of biological role, catalyzes the phosphorylation of L-fuculose. In Salmonella typhi, this protein is L-fuculokinase.